The sequence spans 92 residues: Dolichol-phosphate mannosyltransferase subunit 3 (92 aa).

2 helical membrane-spanning segments follow: residues 8–28 and 37–57; these read LWAL…ALGL and VLWP…LGTV.

The protein belongs to the DPM3 family. In terms of assembly, component of the dolichol-phosphate mannose (DPM) synthase complex composed of DPM1, DPM2 and DPM3; within the complex, associates with DPM1 via its C-terminal domain and with DPM2 via its N-terminal portion. This interaction stabilizes DPM1 protein.

It is found in the endoplasmic reticulum membrane. It participates in protein modification; protein glycosylation. In terms of biological role, stabilizer subunit of the dolichol-phosphate mannose (DPM) synthase complex; tethers catalytic subunit DPM1 to the endoplasmic reticulum. This chain is Dolichol-phosphate mannosyltransferase subunit 3 (DPM3), found in Bos taurus (Bovine).